The following is a 767-amino-acid chain: Protein transport protein Sec23B (767 aa).

The residue at position 2 (alanine 2) is an N-acetylalanine. Zn(2+) contacts are provided by cysteine 61, cysteine 66, cysteine 85, and cysteine 88. At lysine 564 the chain carries N6-acetyllysine. The Gelsolin-like repeat unit spans residues 634 to 720; that stretch reads PEPVLLDSSS…EHGGSQARFL (87 aa).

It belongs to the SEC23/SEC24 family. SEC23 subfamily. COPII is composed of at least five proteins: the Sec23/24 complex, the Sec13/31 complex and Sar1. Interacts with SAR1A. Ubiquitously expressed.

Its subcellular location is the cytoplasmic vesicle. The protein resides in the COPII-coated vesicle membrane. The protein localises to the endoplasmic reticulum membrane. It localises to the cytoplasm. It is found in the cytosol. Component of the coat protein complex II (COPII) which promotes the formation of transport vesicles from the endoplasmic reticulum (ER). The coat has two main functions, the physical deformation of the endoplasmic reticulum membrane into vesicles and the selection of cargo molecules for their transport to the Golgi complex. In Homo sapiens (Human), this protein is Protein transport protein Sec23B.